A 524-amino-acid chain; its full sequence is Glycoprotein (524 aa).

The signal sequence occupies residues 1–19; sequence MVPQALLFVPLLVFPLCFG. At 20–459 the chain is on the virion surface side; the sequence is KFPIYTIPDK…DLGLPNWGKY (440 aa). Disulfide bonds link Cys43/Cys302, Cys54/Cys226, Cys80/Cys113, Cys178/Cys188, Cys208/Cys247, and Cys242/Cys271. A glycan (N-linked (GlcNAc...) asparagine; by host) is linked at Asn56. N-linked (GlcNAc...) asparagine; by host glycans are attached at residues Asn266 and Asn338. Cys363 and Cys370 form a disulfide bridge. A helical membrane pass occupies residues 460 to 480; it reads VLLSAGALTALMLIIFLMTCW. Cys479 carries S-palmitoyl cysteine; by host lipidation. The Intravirion segment spans residues 481–524; it reads RRVNRSEPTQHNLRGTGREVSVTPQSGKIISSWESYKSGGETGL.

Belongs to the lyssavirus glycoprotein family. In terms of assembly, homotrimer. Interacts with matrix protein. Interacts with host TRFC. Interacts with host BST2; this interaction inhibits viral budding by tethering new virions to the cell surface. Interacts with host ITGB1. Interacts with host GRM2. Post-translationally, glycosylated and palmitoylated by host. Glycosylation is crucial for glycoprotein export at the cell surface.

The protein resides in the virion membrane. Its function is as follows. Attaches the virus to host cellular receptor, inducing endocytosis of the virion by using different host proteins including TFRC, GRM2 and ITGB1. In the endosome, the acidic pH induces conformational changes in the glycoprotein trimer, which trigger fusion between virus and cell membrane. There is convincing in vitro evidence that the muscular form of the nicotinic acetylcholine receptor (nAChR), the neuronal cell adhesion molecule (NCAM), and the p75 neurotrophin receptor (p75NTR) bind glycoprotein and thereby facilitate rabies virus entry into cells. The sequence is that of Glycoprotein (G) from Homo sapiens (Human).